Here is a 278-residue protein sequence, read N- to C-terminus: Elongation factor Ts (278 aa).

Residues 80 to 83 (TDFV) form an involved in Mg(2+) ion dislocation from EF-Tu region.

Belongs to the EF-Ts family.

Its subcellular location is the cytoplasm. Functionally, associates with the EF-Tu.GDP complex and induces the exchange of GDP to GTP. It remains bound to the aminoacyl-tRNA.EF-Tu.GTP complex up to the GTP hydrolysis stage on the ribosome. The polypeptide is Elongation factor Ts (Micrococcus luteus (strain ATCC 4698 / DSM 20030 / JCM 1464 / CCM 169 / CCUG 5858 / IAM 1056 / NBRC 3333 / NCIMB 9278 / NCTC 2665 / VKM Ac-2230) (Micrococcus lysodeikticus)).